Reading from the N-terminus, the 174-residue chain is Repair DNA polymerase X (174 aa).

The tract at residues 42–51 (REEKMLNDVD) is involved in ssDNA binding. The Mg(2+) site is built by Asp-49 and Asp-51. An intrachain disulfide couples Cys-81 to Cys-86. Residue Asp-100 participates in Mg(2+) binding.

This sequence belongs to the DNA polymerase type-X family. Mg(2+) serves as cofactor.

It is found in the virion. The enzyme catalyses DNA(n) + a 2'-deoxyribonucleoside 5'-triphosphate = DNA(n+1) + diphosphate. Error-prone polymerase lacking a proofreading 3'-5' exonuclease which catalyzes the gap-filling reaction during the DNA repair process. Specifically binds intermediates in the single-nucleotide base-excision repair process. Also catalyzes DNA polymerization with low nucleotide-insertion fidelity. Probably acts as a strategic DNA mutase, which gives rise to a rapid emergence of variants. Generates mismatched G-G pairs, in that case, the polymerase first binds the deoxynucleotide followed by mismatch formation. Together with the viral DNA ligase, fills the single nucleotide gaps generated by the AP endonuclease. Binds DNA with high affinity via the helix alphaE. The chain is Repair DNA polymerase X from African swine fever virus (isolate Tick/Malawi/Lil 20-1/1983) (ASFV).